A 220-amino-acid chain; its full sequence is Adenylate kinase (220 aa).

10–15 (GAGKGT) provides a ligand contact to ATP. An NMP region spans residues 30 to 59 (STGDMLRAAVKAGSPLGVEAKGYMDAGKLV). AMP-binding positions include threonine 31, arginine 36, 57–59 (KLV), 85–88 (GFPR), and glutamine 92. The interval 122 to 150 (GRRTHPASGRTYHVKFNPPKVEGKDDVTG) is disordered. Positions 122 to 159 (GRRTHPASGRTYHVKFNPPKVEGKDDVTGEPLIQRDDD) are LID. ATP contacts are provided by residues arginine 123 and 132–133 (TY). AMP contacts are provided by arginine 156 and arginine 167. Glycine 206 contributes to the ATP binding site.

It belongs to the adenylate kinase family. Monomer.

It localises to the cytoplasm. The catalysed reaction is AMP + ATP = 2 ADP. Its pathway is purine metabolism; AMP biosynthesis via salvage pathway; AMP from ADP: step 1/1. Functionally, catalyzes the reversible transfer of the terminal phosphate group between ATP and AMP. Plays an important role in cellular energy homeostasis and in adenine nucleotide metabolism. The chain is Adenylate kinase from Burkholderia ambifaria (strain MC40-6).